Here is a 345-residue protein sequence, read N- to C-terminus: Serine proteinase inhibitor 2 (345 aa).

This sequence belongs to the serpin family. Poxviruses subfamily.

It is found in the host cytoplasm. Functionally, viral serpin that inhibits both cysteine and serine proteinases involved in the regulation of host inflammatory and apoptosis processes. Major anti-apoptotic protein which inhibits both intrinsic and extrinsic pathways and strongly cleaves host CASP1 and CASP8 but is a rather poor inhibitor of host CASP3. Prevents the proteolytic activity of host interleukin-1-beta converting enzyme (ICE) and ICE-like enzymes. Can also block apoptosis through host tumor necrosis factor (TNF) receptor. The inhibition of host ICE is an example of a 'cross-class' interaction, in which a serpin inhibits a non-serine proteinase. Also inhibits granzyme B. The chain is Serine proteinase inhibitor 2 (OPG199) from Vaccinia virus (strain Western Reserve) (VACV).